The chain runs to 346 residues: Holliday junction branch migration complex subunit RuvB (346 aa).

The large ATPase domain (RuvB-L) stretch occupies residues 4-184; that stretch reads TDRLIAPTAK…FGIVQRLEFY (181 aa). ATP-binding positions include Arg24, Gly65, Lys68, Thr69, Thr70, 131-133, Arg174, Tyr184, and Arg221; that span reads EDF. Residue Thr69 participates in Mg(2+) binding. The segment at 185 to 255 is small ATPAse domain (RuvB-S); it reads NVKDLTHIVA…LADKALNMLN (71 aa). Residues 258 to 346 are head domain (RuvB-H); it reads ERGFDHMDRR…QESQGGEGIA (89 aa). Arg294, Arg313, and Arg318 together coordinate DNA.

Belongs to the RuvB family. Homohexamer. Forms an RuvA(8)-RuvB(12)-Holliday junction (HJ) complex. HJ DNA is sandwiched between 2 RuvA tetramers; dsDNA enters through RuvA and exits via RuvB. An RuvB hexamer assembles on each DNA strand where it exits the tetramer. Each RuvB hexamer is contacted by two RuvA subunits (via domain III) on 2 adjacent RuvB subunits; this complex drives branch migration. In the full resolvosome a probable DNA-RuvA(4)-RuvB(12)-RuvC(2) complex forms which resolves the HJ.

It is found in the cytoplasm. The catalysed reaction is ATP + H2O = ADP + phosphate + H(+). Its function is as follows. The RuvA-RuvB-RuvC complex processes Holliday junction (HJ) DNA during genetic recombination and DNA repair, while the RuvA-RuvB complex plays an important role in the rescue of blocked DNA replication forks via replication fork reversal (RFR). RuvA specifically binds to HJ cruciform DNA, conferring on it an open structure. The RuvB hexamer acts as an ATP-dependent pump, pulling dsDNA into and through the RuvAB complex. RuvB forms 2 homohexamers on either side of HJ DNA bound by 1 or 2 RuvA tetramers; 4 subunits per hexamer contact DNA at a time. Coordinated motions by a converter formed by DNA-disengaged RuvB subunits stimulates ATP hydrolysis and nucleotide exchange. Immobilization of the converter enables RuvB to convert the ATP-contained energy into a lever motion, pulling 2 nucleotides of DNA out of the RuvA tetramer per ATP hydrolyzed, thus driving DNA branch migration. The RuvB motors rotate together with the DNA substrate, which together with the progressing nucleotide cycle form the mechanistic basis for DNA recombination by continuous HJ branch migration. Branch migration allows RuvC to scan DNA until it finds its consensus sequence, where it cleaves and resolves cruciform DNA. This is Holliday junction branch migration complex subunit RuvB from Cellvibrio japonicus (strain Ueda107) (Pseudomonas fluorescens subsp. cellulosa).